The sequence spans 146 residues: uncharacterized protein (146 aa).

This is an uncharacterized protein from Acidianus filamentous virus 1 (isolate United States/Yellowstone) (AFV-1).